A 125-amino-acid polypeptide reads, in one-letter code: Large ribosomal subunit protein bL12 (125 aa).

It belongs to the bacterial ribosomal protein bL12 family. Homodimer. Part of the ribosomal stalk of the 50S ribosomal subunit. Forms a multimeric L10(L12)X complex, where L10 forms an elongated spine to which 2 to 4 L12 dimers bind in a sequential fashion. Binds GTP-bound translation factors.

In terms of biological role, forms part of the ribosomal stalk which helps the ribosome interact with GTP-bound translation factors. Is thus essential for accurate translation. The polypeptide is Large ribosomal subunit protein bL12 (Chlorobium phaeobacteroides (strain DSM 266 / SMG 266 / 2430)).